The chain runs to 448 residues: High mobility group B protein 15 (448 aa).

In terms of domain architecture, ARID spans 29-120 (VADPRLFMTS…LLNNYEQIYF (92 aa)). Residues 219–236 (PQQSHGVLPNTLNISANP) are compositionally biased toward polar residues. Disordered regions lie at residues 219 to 270 (PQQS…RSGY), 333 to 352 (KKNGQLISNAVPLQQRLPEQ), and 366 to 448 (VEED…AEQN). The segment covering 244–255 (TKRRRRRKKSEI) has biased composition (basic residues). The segment at residues 263–330 (PKPNRSGYNF…RYRTEMEDYR (68 aa)) is a DNA-binding region (HMG box). Acidic residues predominate over residues 389–398 (SIETDPELEE). Residues 399-412 (PSLNPSGPNLNPNP) show a composition bias toward low complexity.

This sequence belongs to the HMGB family.

The protein resides in the nucleus. Its function is as follows. Binds preferentially DNA with A/T-rich content. This is High mobility group B protein 15 (HMGB15) from Arabidopsis thaliana (Mouse-ear cress).